The chain runs to 373 residues: Arfaptin-1 (373 aa).

The tract at residues 1-47 (MAQESPKNSAAEIPVTSNGEVDDSREHSFNRDLKHSLPSGLGLSETQ) is disordered. Ala-2 is modified (N-acetylalanine). A phosphoserine mark is found at Ser-5, Ser-28, Ser-36, Ser-39, Ser-69, Ser-79, and Ser-132. The span at 22 to 35 (DDSREHSFNRDLKH) shows a compositional bias: basic and acidic residues. The 201-residue stretch at 153 to 353 (TVDLELEAQI…NQKQLEQTLK (201 aa)) folds into the AH domain. Thr-361 bears the Phosphothreonine mark.

In terms of assembly, forms homodimers or heterodimers with ARFIP2. Interacts with non-myristoylated GTP-bound ARF3, but not to GDP-bound ARF3. Interacts with ARF1. Binds with lower affinity to ARF5 and with very little affinity to ARF6. Interacts with ARL1. Interacts with ATG9A. Post-translationally, phosphorylated by PRKD1; phosphorylation delocalizes ARFIP1 from the Golgi and disrupts its ability to inhibit the activity of ADP-ribosylation factor, an important component of the vesicle scission machinery. As to expression, ubiquitously expressed. Higher levels in liver, pancreas, placenta, skeletal muscle and heart.

It localises to the golgi apparatus. It is found in the trans-Golgi network membrane. In terms of biological role, plays a role in controlling biogenesis of secretory granules at the trans-Golgi network. Mechanistically, binds ARF-GTP at the neck of a growing secretory granule precursor and forms a protective scaffold. Once the granule precursor has been completely loaded, active PRKD1 phosphorylates ARFIP1 and releases it from ARFs. In turn, ARFs induce fission. Through this mechanism, ensures proper secretory granule formation at the Golgi of pancreatic beta cells. This Homo sapiens (Human) protein is Arfaptin-1.